Reading from the N-terminus, the 173-residue chain is Crossover junction endodeoxyribonuclease RuvC (173 aa).

Catalysis depends on residues D8, E67, and D139. Residues D8, E67, and D139 each contribute to the Mg(2+) site.

The protein belongs to the RuvC family. In terms of assembly, homodimer which binds Holliday junction (HJ) DNA. The HJ becomes 2-fold symmetrical on binding to RuvC with unstacked arms; it has a different conformation from HJ DNA in complex with RuvA. In the full resolvosome a probable DNA-RuvA(4)-RuvB(12)-RuvC(2) complex forms which resolves the HJ. Mg(2+) is required as a cofactor.

The protein resides in the cytoplasm. The enzyme catalyses Endonucleolytic cleavage at a junction such as a reciprocal single-stranded crossover between two homologous DNA duplexes (Holliday junction).. The RuvA-RuvB-RuvC complex processes Holliday junction (HJ) DNA during genetic recombination and DNA repair. Endonuclease that resolves HJ intermediates. Cleaves cruciform DNA by making single-stranded nicks across the HJ at symmetrical positions within the homologous arms, yielding a 5'-phosphate and a 3'-hydroxyl group; requires a central core of homology in the junction. The consensus cleavage sequence is 5'-(A/T)TT(C/G)-3'. Cleavage occurs on the 3'-side of the TT dinucleotide at the point of strand exchange. HJ branch migration catalyzed by RuvA-RuvB allows RuvC to scan DNA until it finds its consensus sequence, where it cleaves and resolves the cruciform DNA. This chain is Crossover junction endodeoxyribonuclease RuvC, found in Baumannia cicadellinicola subsp. Homalodisca coagulata.